The chain runs to 177 residues: FANCD2 opposite strand protein (177 aa).

In Homo sapiens (Human), this protein is FANCD2 opposite strand protein (FANCD2OS).